The sequence spans 570 residues: Rqc2 homolog RqcH (570 aa).

An NFACT-N domain region spans residues 1–173; sequence MSFDGMFTYG…LPPAQDKISP (173 aa). Residues 179–281 are hhH domain; it reads DDILRHLSFQ…ELLDRFYFGK (103 aa). 2 coiled-coil regions span residues 279–336 and 368–430; these read FGKA…TANL and TPSE…VEGK. The segment at 282–434 is coiled-coil-M (CCM); that stretch reads AERDRVKQQA…ELVEGKYLRP (153 aa). Residues 446 to 570 form an NFACT-R region; that stretch reads HNPVLETYES…ADTVIKLKKS (125 aa).

It belongs to the NEMF family. In terms of assembly, associates with isolated or stalled 50S ribosomal subunits. Binds to RqcP. Interacts with ribosomal protein uL11. Displaced from the 50S subunit by thiostrepton. In crystallized 50S subunits RqcH is variously associated with A/P-site tRNA, P-site tRNA and RqcP, an E-site tRNA or A- and P-site tRNAs and RqcP2(YlmH).

In terms of biological role, key component of the ribosome quality control system (RQC), a ribosome-associated complex that mediates the extraction of incompletely synthesized nascent chains from stalled ribosomes and their subsequent degradation. RqcH recruits Ala-charged tRNA, and with RqcP directs the elongation of stalled nascent chains on 50S ribosomal subunits, leading to non-templated C-terminal alanine extensions (Ala tail). The Ala tail promotes nascent chain degradation. RqcH, RqcP and charged tRNA(Ala) are necessary and sufficient to add an Ala tail to a model stalled nascent peptide; does not add Val. Binds the P-site tRNA in 50S ribosomal subunit, unwinds the anticodon stem and interacts with the splayed anticodon. Selectively binds tRNA(Ala) isoacceptors, even in the absence of the 50S ribosomal subunit. Adds between 1 and at least 8 Ala residues to the nascent chain; detection of the Ala tail requires either deletion of clpP or its inhibition. Binds to 50S ribosomal subunits, at least 30% of which contain a P-site tRNA and thus are obstructed. The protein is Rqc2 homolog RqcH of Bacillus subtilis (strain 168).